Reading from the N-terminus, the 1207-residue chain is MKAHKTVFNQHPLSLNKLFFVLLLIFFLPPASPAASVNGLYKDSQQLLSFKAALPPTPTLLQNWLSSTDPCSFTGVSCKNSRVSSIDLSNTFLSVDFSLVTSYLLPLSNLESLVLKNANLSGSLTSAAKSQCGVTLDSIDLAENTISGPISDISSFGVCSNLKSLNLSKNFLDPPGKEMLKGATFSLQVLDLSYNNISGFNLFPWVSSMGFVELEFFSIKGNKLAGSIPELDFKNLSYLDLSANNFSTVFPSFKDCSNLQHLDLSSNKFYGDIGSSLSSCGKLSFLNLTNNQFVGLVPKLPSESLQYLYLRGNDFQGVYPNQLADLCKTVVELDLSYNNFSGMVPESLGECSSLELVDISNNNFSGKLPVDTLLKLSNIKTMVLSFNKFVGGLPDSFSNLPKLETLDMSSNNLTGIIPSGICKDPMNNLKVLYLQNNLFKGPIPDSLSNCSQLVSLDLSFNYLTGSIPSSLGSLSKLKDLILWLNQLSGEIPQELMYLQALENLILDFNDLTGPIPASLSNCTKLNWISLSNNQLSGEIPASLGRLSNLAILKLGNNSISGNIPAELGNCQSLIWLDLNTNFLNGSIPPPLFKQSGNIAVALLTGKRYVYIKNDGSKECHGAGNLLEFGGIRQEQLDRISTRHPCNFTRVYRGITQPTFNHNGSMIFLDLSYNKLEGSIPKELGAMYYLSILNLGHNDLSGMIPQQLGGLKNVAILDLSYNRFNGTIPNSLTSLTLLGEIDLSNNNLSGMIPESAPFDTFPDYRFANNSLCGYPLPLPCSSGPKSDANQHQKSHRRQASLAGSVAMGLLFSLFCIFGLIIVAIETKKRRRKKEAALEAYMDGHSHSATANSAWKFTSAREALSINLAAFEKPLRKLTFADLLEATNGFHNDSLVGSGGFGDVYKAQLKDGSVVAIKKLIHVSGQGDREFTAEMETIGKIKHRNLVPLLGYCKVGEERLLVYEYMKYGSLEDVLHDRKKTGIKLNWPARRKIAIGAARGLAFLHHNCIPHIIHRDMKSSNVLLDENLEARVSDFGMARLMSAMDTHLSVSTLAGTPGYVPPEYYQSFRCSTKGDVYSYGVVLLELLTGKQPTDSADFGDNNLVGWVKLHAKGKITDVFDRELLKEDASIEIELLQHLKVACACLDDRHWKRPTMIQVMAMFKEIQAGSGMDSTSTIGADDVNFSGVEGGIEMGINGSIKEGNELSKHL.

An N-terminal signal peptide occupies residues 1–34 (MKAHKTVFNQHPLSLNKLFFVLLLIFFLPPASPA). The Cys pair 1 signature appears at 71-78 (CSFTGVSC). LRR repeat units follow at residues 109–131 (NLES…AKSQ), 135–157 (TLDS…SSFG), 161–181 (NLKS…EMLK), 186–207 (SLQV…PWVS), 213–234 (ELEF…LDFK), 235–257 (NLSY…KDCS), 258–280 (NLQH…LSSC), 282–304 (KLSF…PSES), 305–325 (LQYL…QLAD), 329–350 (TVVE…SLGE), 353–375 (SLEL…TLLK), 378–401 (NIKT…SNLP), 402–423 (KLET…GICK), 428–450 (NLKV…LSNC), 452–474 (QLVS…LGSL), 476–499 (KLKD…MYLQ), 500–523 (ALEN…SNCT), 524–547 (KLNW…GRLS), 548–570 (NLAI…LGNC), and 572–594 (SLIW…LFKQ). The N-linked (GlcNAc...) asparagine glycan is linked to Asn119. Residues Asn166 and Asn196 are each glycosylated (N-linked (GlcNAc...) asparagine). Asn235 and Asn245 each carry an N-linked (GlcNAc...) asparagine glycan. Residue Asn287 is glycosylated (N-linked (GlcNAc...) asparagine). 2 N-linked (GlcNAc...) asparagine glycosylation sites follow: Asn339 and Asn363. Residues Asn412 and Asn449 are each glycosylated (N-linked (GlcNAc...) asparagine). N-linked (GlcNAc...) asparagine glycosylation is present at Asn521. Asn556, Asn584, Asn646, and Asn662 each carry an N-linked (GlcNAc...) asparagine glycan. 4 LRR repeats span residues 664-686 (SMIF…LGAM), 688-711 (YLSI…GGLK), 712-735 (NVAI…TSLT), and 736-758 (LLGE…APFD). Residues Asn724, Asn746, and Asn767 are each glycosylated (N-linked (GlcNAc...) asparagine). A Cys pair 2 motif is present at residues 771-779 (CGYPLPLPC). A helical transmembrane segment spans residues 803 to 823 (SVAMGLLFSLFCIFGLIIVAI). One can recognise a Protein kinase domain in the interval 888–1163 (FHNDSLVGSG…IQVMAMFKEI (276 aa)). ATP-binding positions include 894–902 (VGSGGFGDV) and Lys916. Residue Asp1014 is the Proton acceptor of the active site.

The protein belongs to the protein kinase superfamily. Ser/Thr protein kinase family. Glycosylated.

It is found in the cell membrane. It catalyses the reaction L-seryl-[protein] + ATP = O-phospho-L-seryl-[protein] + ADP + H(+). It carries out the reaction L-threonyl-[protein] + ATP = O-phospho-L-threonyl-[protein] + ADP + H(+). Its function is as follows. Receptor with a serine/threonine-protein kinase activity. Involved in the perception of systemin, a peptide hormone responsible for the systemic activation of defense genes in leaves of wounded plants. May also regulate, in response to brassinosteroid binding, a signaling cascade involved in plant development. This chain is Systemin receptor SR160, found in Solanum peruvianum (Peruvian tomato).